Here is a 313-residue protein sequence, read N- to C-terminus: Proline iminopeptidase (313 aa).

An AB hydrolase-1 domain is found at 35–298 (KPVVMLHGGP…SPASGHSAFE (264 aa)). The active-site Nucleophile is the S110. D266 is an active-site residue. H294 acts as the Proton donor in catalysis.

It belongs to the peptidase S33 family. Homooligomer.

Its subcellular location is the cytoplasm. The catalysed reaction is Release of N-terminal proline from a peptide.. In terms of biological role, may be involved in proline metabolism and sensitivity to ascamycin. Has ascamycin dealanylating activity. This is Proline iminopeptidase (pip) from Xanthomonas citri (Xanthomonas campestris pv. citri).